The chain runs to 499 residues: Salviol synthase (499 aa).

A helical membrane pass occupies residues 4–24 (HIPSLVLCISFFIFFKIVSKL). Heme is bound at residue cysteine 436.

This sequence belongs to the cytochrome P450 family. It depends on heme as a cofactor. Expressed in leaf glandular trichomes.

It localises to the membrane. It carries out the reaction ferruginol + reduced [NADPH--hemoprotein reductase] + O2 = salviol + oxidized [NADPH--hemoprotein reductase] + H2O + H(+). It participates in secondary metabolite biosynthesis; terpenoid biosynthesis. Its function is as follows. Monooxygenase involved in the biosynthesis of labdane-related diterpenes natural products. Catalyzes the oxidation of ferruginol to produce salviol. Salviol is an intermediate in the biosynthesis of carnosate, a potent antioxidant. The chain is Salviol synthase from Salvia pomifera (Apple sage).